The chain runs to 313 residues: Putative olfactory receptor 2B3 (313 aa).

Over 1 to 25 the chain is Extracellular; sequence MNWENESSPKEFILLGFSDRAWLQM. Residue asparagine 5 is glycosylated (N-linked (GlcNAc...) asparagine). Residues 26-49 traverse the membrane as a helical segment; sequence PLFVVLLISYTITIFGNVSIMMVC. Residues 50–57 are Cytoplasmic-facing; it reads ILDPKLHT. The helical transmembrane segment at 58 to 79 threads the bilayer; it reads PMYFFLTNLSILDLCYTTTTVP. The Extracellular segment spans residues 80–100; the sequence is HMLVNIGCNKKTISYAGCVAH. An intrachain disulfide couples cysteine 97 to cysteine 189. The helical transmembrane segment at 101-120 threads the bilayer; the sequence is LIIFLALGATECLLLAVMSF. The Cytoplasmic portion of the chain corresponds to 121 to 139; the sequence is DRYVAVCRPLHYVVIMNYW. A helical transmembrane segment spans residues 140–158; that stretch reads FCLRMAAFSWLIGFGNSVL. At 159–195 the chain is on the extracellular side; sequence QSSLTLNMPRCGHQEVDHFFCEVPALLKLSCADTKPI. A helical membrane pass occupies residues 196 to 219; it reads EAELFFFSVLILLIPVTLILISYG. The Cytoplasmic segment spans residues 220–236; sequence FIAQAVLKIRSAEGRQK. The chain crosses the membrane as a helical span at residues 237–259; that stretch reads AFGTCGSHMIVVSLFYGTAIYMY. Over 260-272 the chain is Extracellular; it reads LQPPSSTSKDWGK. Residues 273–292 form a helical membrane-spanning segment; sequence MVSLFYGIITSMLNSLIYSL. At 293–313 the chain is on the cytoplasmic side; it reads RNKDMKEAFKRLMPRIFFCKK.

It belongs to the G-protein coupled receptor 1 family.

The protein resides in the cell membrane. Its function is as follows. Odorant receptor. The polypeptide is Putative olfactory receptor 2B3 (OR2B3) (Homo sapiens (Human)).